The sequence spans 160 residues: S-ribosylhomocysteine lyase (160 aa).

Fe cation is bound by residues histidine 57, histidine 61, and cysteine 127.

It belongs to the LuxS family. Homodimer. Fe cation serves as cofactor.

It catalyses the reaction S-(5-deoxy-D-ribos-5-yl)-L-homocysteine = (S)-4,5-dihydroxypentane-2,3-dione + L-homocysteine. Functionally, involved in the synthesis of autoinducer 2 (AI-2) which is secreted by bacteria and is used to communicate both the cell density and the metabolic potential of the environment. The regulation of gene expression in response to changes in cell density is called quorum sensing. Catalyzes the transformation of S-ribosylhomocysteine (RHC) to homocysteine (HC) and 4,5-dihydroxy-2,3-pentadione (DPD). In Streptococcus suis (strain 98HAH33), this protein is S-ribosylhomocysteine lyase.